The primary structure comprises 509 residues: Aspartyl/glutamyl-tRNA(Asn/Gln) amidotransferase subunit B (509 aa).

It belongs to the GatB/GatE family. GatB subfamily. Heterotrimer of A, B and C subunits.

It carries out the reaction L-glutamyl-tRNA(Gln) + L-glutamine + ATP + H2O = L-glutaminyl-tRNA(Gln) + L-glutamate + ADP + phosphate + H(+). The enzyme catalyses L-aspartyl-tRNA(Asn) + L-glutamine + ATP + H2O = L-asparaginyl-tRNA(Asn) + L-glutamate + ADP + phosphate + 2 H(+). Functionally, allows the formation of correctly charged Asn-tRNA(Asn) or Gln-tRNA(Gln) through the transamidation of misacylated Asp-tRNA(Asn) or Glu-tRNA(Gln) in organisms which lack either or both of asparaginyl-tRNA or glutaminyl-tRNA synthetases. The reaction takes place in the presence of glutamine and ATP through an activated phospho-Asp-tRNA(Asn) or phospho-Glu-tRNA(Gln). The polypeptide is Aspartyl/glutamyl-tRNA(Asn/Gln) amidotransferase subunit B (Psychrobacter arcticus (strain DSM 17307 / VKM B-2377 / 273-4)).